Reading from the N-terminus, the 1068-residue chain is TSC22 domain family protein 1 (1068 aa).

The interval 1–98 (MHQPPESTAA…SQAQLQAQPL (98 aa)) is required for interaction with TGFBR1 and promotion of TGF-beta signaling. Disordered stretches follow at residues 23–110 (AHPA…KKSG), 125–288 (ISSN…SPAS), and 602–623 (YSQA…QQLQ). A compositionally biased stretch (low complexity) spans 36–55 (GSASALNAAGTGVGSSATSS). The span at 58-70 (FPPPSLLQPPPPA) shows a compositional bias: pro residues. Over residues 84 to 100 (SLNLLSQAQLQAQPLAP) the composition is skewed to low complexity. Residues 133–142 (EDTESYDDLD) are compositionally biased toward acidic residues. The segment covering 216–240 (HPHHLHHHHHIHHGHHLQHGHHHPS) has biased composition (basic residues). Residues 241–250 (HVAVASASIP) show a composition bias toward low complexity. Residues 261–271 (KLSTTGSSDSI) are compositionally biased toward polar residues. Ser-263 is modified (phosphoserine). The segment covering 272–288 (TPVAPTSAVSSSGSPAS) has biased composition (low complexity). Pro residues predominate over residues 609-620 (VQTPLPGAPPPQ). A leucine-zipper region spans residues 1000 to 1021 (VLKEQIKELIEKNSQLEQENNL). The disordered stretch occupies residues 1032–1068 (AQFQAQLQTGSPPATTQPQGTTQPPAQPASQGSGPTA). The span at 1039 to 1068 (QTGSPPATTQPQGTTQPPAQPASQGSGPTA) shows a compositional bias: low complexity.

It belongs to the TSC-22/Dip/Bun family. As to quaternary structure, forms homodimers. Forms heterodimers. Component of a complex composed of TSC22D1 (via N-terminus), TGFBR1 and TGFBR2; the interaction between TSC22D1 and TGFBR1 is inhibited by SMAD7 and promoted by TGFB1. Interacts with SMAD7; the interaction requires TGF-beta and the interaction is inhibited by TGFBR1. Interacts with TPT1/fortilin; interaction results in the destabilization of TSC22D1 protein and prevents TSC22D1-mediated apoptosis. Interacts with SMAD4 (via N-terminus). Interacts with ACVRL1/ALK1, ACVR1/ALK2, BMPR1A/ALK3, ACVR1B/ALK4, BMPR1B/ALK6, ACVR2A/ACTRII, and BMPR2. Interacts with SMAD6. Interacts with TFE3; the interaction is enhanced in the presence of TGF-beta. In terms of assembly, forms a heterodimer with TSC22D4/THG1. Forms a heterodimer with TSC22D4/THG1. Interacts with histone H1-2. Interacts with GNL3.

The protein localises to the cytoplasm. It localises to the nucleus. It is found in the cell membrane. Its subcellular location is the mitochondrion. Transcriptional repressor. Acts on the C-type natriuretic peptide (CNP) promoter. Acts to promote CASP3-mediated apoptosis. Positively regulates TGF-beta signaling by interacting with SMAD7 which inhibits binding of SMAD7 to TGFBR1, preventing recruitment of SMURF ubiquitin ligases to TGFBR1 and inhibiting SMURF-mediated ubiquitination and degradation of TGFBR1. Contributes to enhancement of TGF-beta signaling by binding to and modulating the transcription activator activity of SMAD4. Promotes TGF-beta-induced transcription of COL1A2; via its interaction with TFE3 at E-boxes in the gene proximal promoter. Plays a role in the repression of hematopoietic precursor cell growth. Promotes IL2 deprivation-induced apoptosis in T-lymphocytes, via repression of TSC22D3/GILZ transcription and activation of the caspase cascade. In terms of biological role, may act to negatively regulate TGFB3 signaling and thereby inhibit cell death in mammary gland cells. Its function is as follows. Positively regulates cell death in response to TGFB3 during mammary gland involution. This chain is TSC22 domain family protein 1, found in Macaca fascicularis (Crab-eating macaque).